Here is a 186-residue protein sequence, read N- to C-terminus: RIO-type serine/threonine-protein kinase Rio1 (186 aa).

Lys15 contributes to the ATP binding site. Asp124 functions as the Proton acceptor in the catalytic mechanism. Residues Asn129 and Asp140 each contribute to the Mg(2+) site. The active-site 4-aspartylphosphate intermediate is Asp140.

The protein belongs to the protein kinase superfamily. RIO-type Ser/Thr kinase family.

The catalysed reaction is L-seryl-[protein] + ATP = O-phospho-L-seryl-[protein] + ADP + H(+). It carries out the reaction L-threonyl-[protein] + ATP = O-phospho-L-threonyl-[protein] + ADP + H(+). The enzyme catalyses ATP + H2O = ADP + phosphate + H(+). Its function is as follows. Despite the protein kinase domain is proposed to act predominantly as an ATPase. This Thermoplasma acidophilum (strain ATCC 25905 / DSM 1728 / JCM 9062 / NBRC 15155 / AMRC-C165) protein is RIO-type serine/threonine-protein kinase Rio1 (rio1).